The chain runs to 540 residues: Beta-glucosidase 1B (540 aa).

Residues Gln-25, His-128, and Asn-174 each contribute to the substrate site. Catalysis depends on Glu-175, which acts as the Proton donor. Tyr-316 lines the substrate pocket. Glu-380 (nucleophile) is an active-site residue. Substrate is bound by residues Trp-430 and 437–438; that span reads EW. The span at 481-492 shows a compositional bias: low complexity; sequence PAAETKKAATPS. Positions 481 to 524 are disordered; it reads PAAETKKAATPSPLKPHGAISNGVSKKSSATKEPKSASRKKGRK.

The protein belongs to the glycosyl hydrolase 1 family.

The catalysed reaction is Hydrolysis of terminal, non-reducing beta-D-glucosyl residues with release of beta-D-glucose.. Plays an important role in cellulose degradation. Shows hydrolytic activity against several glycosidic compounds. The sequence is that of Beta-glucosidase 1B from Phanerodontia chrysosporium (White-rot fungus).